Consider the following 337-residue polypeptide: Glucose transporter 2C (337 aa).

Residues 1–22 are disordered; it reads MTERRDNVSHAPDAIEGPNDGA. Residues 1–43 are Cytoplasmic-facing; that stretch reads MTERRDNVSHAPDAIEGPNDGAHAEDTSPGFFSLENLGVAQVQ. Residues 44-64 form a helical membrane-spanning segment; that stretch reads VVGGTLNGFSIGFVAVYILLY. Residues 65 to 119 are Extracellular-facing; it reads EVATNCSLFKTTEACKAVGSYGCEWKDTEVCSWKKECDSDSDGVNPCESLIGYSS. An N-linked (GlcNAc...) asparagine glycan is attached at asparagine 69. Residues 120–140 form a helical membrane-spanning segment; that stretch reads LYSGIFASAMIVGSMVGSIIA. Topologically, residues 141–152 are cytoplasmic; sequence GKCITMFGLKKS. The helical transmembrane segment at 153–173 threads the bilayer; sequence FIIVGVMSVVASALNHISVAT. Residues 174–175 lie on the Extracellular side of the membrane; that stretch reads NE. Residues 176–196 traverse the membrane as a helical segment; sequence FWVLCAGRVLMGIGLGVVCVI. At 197 to 214 the chain is on the cytoplasmic side; sequence CPMYVNENAHPKLSKVDG. The helical transmembrane segment at 215–235 threads the bilayer; that stretch reads VLFQVFITFGIMLAAMLGLIL. The Extracellular segment spans residues 236–250; it reads DKTVNYDNDPDMAGR. Residues 251–271 form a helical membrane-spanning segment; that stretch reads FHGFCAVSSVLSVAMFLVGMF. Residues 272-300 are Cytoplasmic-facing; that stretch reads LRESTATFSQDDDGKADGGMDPNEYGWGQ. Residues 301–321 form a helical membrane-spanning segment; that stretch reads MLWPLFMGAVTAGTLQLTGIN. The Extracellular portion of the chain corresponds to 322-337; sequence AVMNYAPKITENLGMD.

The protein belongs to the major facilitator superfamily. Sugar transporter (TC 2.A.1.1) family.

It is found in the membrane. Its function is as follows. Facilitative glucose transporter. The protein is Glucose transporter 2C (THT2C) of Trypanosoma brucei brucei.